The sequence spans 281 residues: 2,3,4,5-tetrahydropyridine-2,6-dicarboxylate N-succinyltransferase (281 aa).

Belongs to the transferase hexapeptide repeat family.

The protein localises to the cytoplasm. The catalysed reaction is (S)-2,3,4,5-tetrahydrodipicolinate + succinyl-CoA + H2O = (S)-2-succinylamino-6-oxoheptanedioate + CoA. It participates in amino-acid biosynthesis; L-lysine biosynthesis via DAP pathway; LL-2,6-diaminopimelate from (S)-tetrahydrodipicolinate (succinylase route): step 1/3. The protein is 2,3,4,5-tetrahydropyridine-2,6-dicarboxylate N-succinyltransferase of Afipia carboxidovorans (strain ATCC 49405 / DSM 1227 / KCTC 32145 / OM5) (Oligotropha carboxidovorans).